Consider the following 173-residue polypeptide: Crossover junction endodeoxyribonuclease RuvC (173 aa).

Residues Asp8, Glu67, and Asp139 contribute to the active site. Mg(2+)-binding residues include Asp8, Glu67, and Asp139.

It belongs to the RuvC family. In terms of assembly, homodimer which binds Holliday junction (HJ) DNA. The HJ becomes 2-fold symmetrical on binding to RuvC with unstacked arms; it has a different conformation from HJ DNA in complex with RuvA. In the full resolvosome a probable DNA-RuvA(4)-RuvB(12)-RuvC(2) complex forms which resolves the HJ. Mg(2+) is required as a cofactor.

It localises to the cytoplasm. The enzyme catalyses Endonucleolytic cleavage at a junction such as a reciprocal single-stranded crossover between two homologous DNA duplexes (Holliday junction).. Its function is as follows. The RuvA-RuvB-RuvC complex processes Holliday junction (HJ) DNA during genetic recombination and DNA repair. Endonuclease that resolves HJ intermediates. Cleaves cruciform DNA by making single-stranded nicks across the HJ at symmetrical positions within the homologous arms, yielding a 5'-phosphate and a 3'-hydroxyl group; requires a central core of homology in the junction. The consensus cleavage sequence is 5'-(A/T)TT(C/G)-3'. Cleavage occurs on the 3'-side of the TT dinucleotide at the point of strand exchange. HJ branch migration catalyzed by RuvA-RuvB allows RuvC to scan DNA until it finds its consensus sequence, where it cleaves and resolves the cruciform DNA. The sequence is that of Crossover junction endodeoxyribonuclease RuvC from Shewanella baltica (strain OS223).